The following is a 71-amino-acid chain: Ranatuerin-2PLa (71 aa).

An N-terminal signal peptide occupies residues 1–22; that stretch reads MFTTKKSMLLFFFLGTISLSLC. A propeptide spanning residues 23–41 is cleaved from the precursor; that stretch reads EQERGADEDDGVEMTEEEV. An intrachain disulfide couples C66 to C71.

As to expression, expressed by the skin glands.

It is found in the secreted. In terms of biological role, may have antimicrobial activity against the Gram-negative bacterium E.coli. The sequence is that of Ranatuerin-2PLa from Lithobates palustris (Pickerel frog).